Consider the following 262-residue polypeptide: Small ribosomal subunit protein eS4y (262 aa).

Positions 42-104 (LPLVLIIRNR…TNENFRLLYD (63 aa)) constitute an S4 RNA-binding domain.

The protein belongs to the eukaryotic ribosomal protein eS4 family.

The protein resides in the cytoplasm. This Arabidopsis thaliana (Mouse-ear cress) protein is Small ribosomal subunit protein eS4y (RPS4B).